The chain runs to 1012 residues: Formate dehydrogenase subunit alpha (1012 aa).

Residues 1 to 35 (MLIKRRAFLKLTAAGATLSAFGGLGVDLAPAKAQA) constitute a signal peptide (tat-type signal). A 4Fe-4S Mo/W bis-MGD-type domain is found at 45–103 (AKQTTSVCCYCSVGCGLIVHTDKKTNRAINVEGDPDHPINEGSLCAKGASTWQLAENER). 4 residues coordinate [4Fe-4S] cluster: Cys-52, Cys-55, Cys-59, and Cys-89. Sec-193 contacts W-bis(molybdopterin guanine dinucleotide). Position 193 (Sec-193) is a non-standard amino acid, selenocysteine. The Ca(2+) site is built by Thr-393, Lys-395, Lys-398, Leu-428, and Asn-430. A disulfide bridge connects residues Cys-852 and Cys-879.

Belongs to the prokaryotic molybdopterin-containing oxidoreductase family. Heterodimer of alpha (FdhA) and beta (FdhB) subunits. [4Fe-4S] cluster serves as cofactor. The cofactor is W-bis(molybdopterin guanine dinucleotide). In terms of processing, the disulfide bond is likely to be broken in the active form of this enzyme. Post-translationally, predicted to be exported by the Tat system. The position of the signal peptide cleavage has been experimentally proven.

The protein localises to the periplasm. The catalysed reaction is formate + NAD(+) = CO2 + NADH. Functionally, alpha chain of the formate dehydrogenase (FDH) catalyze the reversible two-electron oxidation of formate to carbon dioxide. FDH loses activity in the presence of air, but this activity can be restored. The alpha subunit of formate dehydrogenase forms the active site. The chain is Formate dehydrogenase subunit alpha from Megalodesulfovibrio gigas (Desulfovibrio gigas).